Reading from the N-terminus, the 388-residue chain is Pre-mRNA-splicing factor cwf2 (388 aa).

Residues 43 to 63 (VKRKKQPARKQIETRPEYEME) form a disordered region. The segment at 111–138 (NPGSFFCLYFARGMCSEGSKCEYLHRLP) adopts a C3H1-type zinc-finger fold. Residues 174–248 (YTLYVGGITP…ECLNVRWATT (75 aa)) enclose the RRM domain. The disordered stretch occupies residues 331 to 352 (PNKSQSEEGSNDDHKSVTTTES).

It belongs to the RRM CWC2 family. As to quaternary structure, belongs to the 40S cdc5-associated complex (or cwf complex), a spliceosome sub-complex reminiscent of a late-stage spliceosome composed of the U2, U5 and U6 snRNAs and at least brr2, cdc5, cwf2/prp3, cwf3/syf1, cwf4/syf3, cwf5/ecm2, spp42/cwf6, cwf7/spf27, cwf8, cwf9, cwf10, cwf11, cwf12, prp45/cwf13, cwf14, cwf15, cwf16, cwf17, cwf18, cwf19, cwf20, cwf21, cwf22, cwf23, cwf24, cwf25, cwf26, cyp7/cwf27, cwf28, cwf29/ist3, lea1, msl1, prp5/cwf1, prp10, prp12/sap130, prp17, prp22, sap61, sap62, sap114, sap145, slu7, smb1, smd1, smd3, smf1, smg1 and syf2.

It is found in the nucleus. Involved in the first step of pre-mRNA splicing. Required for cell growth and cell cycle control. Plays a role in the levels of the U1, U4, U5 and U6 snRNAs and the maintenance of the U4/U6 snRNA complex. May provide the link between the 'nineteen complex' NTC spliceosome protein complex and the spliceosome through the U6 snRNA. Associates predominantly with U6 snRNAs in assembled active spliceosomes. Binds directly to the internal stem-loop (ISL) domain of the U6 snRNA and to the pre-mRNA intron near the 5' splice site during the activation and catalytic phases of the spliceosome cycle. Involved in pre-mRNA splicing. This is Pre-mRNA-splicing factor cwf2 (cwf2) from Schizosaccharomyces pombe (strain 972 / ATCC 24843) (Fission yeast).